The primary structure comprises 499 residues: Bifunctional purine biosynthesis protein PurH (499 aa).

Residues 1–144 (MIKRALISVF…KNFKDVVVLT (144 aa)) enclose the MGS-like domain.

It belongs to the PurH family.

It carries out the reaction (6R)-10-formyltetrahydrofolate + 5-amino-1-(5-phospho-beta-D-ribosyl)imidazole-4-carboxamide = 5-formamido-1-(5-phospho-D-ribosyl)imidazole-4-carboxamide + (6S)-5,6,7,8-tetrahydrofolate. It catalyses the reaction IMP + H2O = 5-formamido-1-(5-phospho-D-ribosyl)imidazole-4-carboxamide. Its pathway is purine metabolism; IMP biosynthesis via de novo pathway; 5-formamido-1-(5-phospho-D-ribosyl)imidazole-4-carboxamide from 5-amino-1-(5-phospho-D-ribosyl)imidazole-4-carboxamide (10-formyl THF route): step 1/1. It functions in the pathway purine metabolism; IMP biosynthesis via de novo pathway; IMP from 5-formamido-1-(5-phospho-D-ribosyl)imidazole-4-carboxamide: step 1/1. The chain is Bifunctional purine biosynthesis protein PurH from Clostridium botulinum (strain Hall / ATCC 3502 / NCTC 13319 / Type A).